Here is a 621-residue protein sequence, read N- to C-terminus: Methionine--tRNA ligase (621 aa).

A 'HIGH' region motif is present at residues 11-21; sequence PYANGPRHIGH. The Zn(2+) site is built by Cys143, Cys146, Cys156, and Cys159. Residues 347–351 carry the 'KMSKS' region motif; the sequence is KFSSS. Residue Ser350 participates in ATP binding.

Belongs to the class-I aminoacyl-tRNA synthetase family. MetG type 1 subfamily. As to quaternary structure, monomer. It depends on Zn(2+) as a cofactor.

It localises to the cytoplasm. It catalyses the reaction tRNA(Met) + L-methionine + ATP = L-methionyl-tRNA(Met) + AMP + diphosphate. Functionally, is required not only for elongation of protein synthesis but also for the initiation of all mRNA translation through initiator tRNA(fMet) aminoacylation. This Bifidobacterium longum subsp. infantis (strain ATCC 15697 / DSM 20088 / JCM 1222 / NCTC 11817 / S12) protein is Methionine--tRNA ligase.